A 1134-amino-acid polypeptide reads, in one-letter code: Tetrathionate reductase subunit A (1134 aa).

The tat-type signal signal peptide spans methionine 1–arginine 31. The region spanning glycine 46 to tyrosine 133 is the 4Fe-4S Mo/W bis-MGD-type domain. The [4Fe-4S] cluster site is built by cysteine 53, cysteine 56, cysteine 60, and cysteine 119.

This sequence belongs to the prokaryotic molybdopterin-containing oxidoreductase family. Probably composed of three subunits: TtrA, TtrB and TtrC. Precursor interacts with TtrD. It depends on [4Fe-4S] cluster as a cofactor. Mo-bis(molybdopterin guanine dinucleotide) serves as cofactor. Post-translationally, exported by the Tat system. The position of the signal peptide cleavage has not been experimentally proven.

It is found in the cell membrane. Functionally, part of a membrane-bound tetrathionate reductase that catalyzes the reduction of tetrathionate to thiosulfate. TtrA is the catalytic subunit. This Archaeoglobus fulgidus (strain ATCC 49558 / DSM 4304 / JCM 9628 / NBRC 100126 / VC-16) protein is Tetrathionate reductase subunit A (ttrA).